The chain runs to 34 residues: Potassium channel toxin alpha-KTx 6.13 (34 aa).

Disulfide bonds link cysteine 3-cysteine 24, cysteine 9-cysteine 29, cysteine 13-cysteine 31, and cysteine 19-cysteine 34. At cysteine 34 the chain carries Cysteine amide.

It belongs to the short scorpion toxin superfamily. Potassium channel inhibitor family. Alpha-KTx 06 subfamily. Expressed by the venom gland.

Its subcellular location is the secreted. In terms of biological role, antagonist of Kv1/KCNA potassium channels. Shows a weak interaction with muscle-type nicotinic acetylcholine receptors (nAChR), since it inhibits alpha-bungarotoxin binding to both muscle-type nAChR from T.californica (IC(50)=490 nM). This suggests it probably weakly inhibits nAChR. The sequence is that of Potassium channel toxin alpha-KTx 6.13 from Heterometrus spinifer (Asia giant forest scorpion).